Consider the following 524-residue polypeptide: Solute carrier family 35 member F5 (524 aa).

A run of 2 helical transmembrane segments spans residues 69 to 89 and 101 to 121; these read MALGIVILLLVDVIWVASSEL and FFSTFAKTSMFVLYLLGFIIW. At Ser-207 the chain carries Phosphoserine. The next 8 membrane-spanning stretches (helical) occupy residues 244–264, 269–289, 297–317, 328–348, 362–382, 396–416, 421–441, and 453–473; these read ISFFFCFVWFLANLSYQEALS, AIVNILSSTSGLFTLILAAVF, FTLSKLLAVILSIGGVVLVNL, TIGSIWSLAGAMFYAVYIVMI, MFFGFVGLFNLLLLWPGFFLL, VVLLCIIINGLIGTVLSEFLW, FLTSSLIGTLALSLTIPLSII, and WLFFAGAIPVFFSFFIVTLLC. Residues 253–317 form the EamA domain; sequence FLANLSYQEA…SIGGVVLVNL (65 aa).

Belongs to the SLC35F solute transporter family.

It localises to the membrane. Its function is as follows. Putative solute transporter. This is Solute carrier family 35 member F5 (Slc35f5) from Mus musculus (Mouse).